Here is a 313-residue protein sequence, read N- to C-terminus: Putative S-adenosyl-L-methionine-dependent methyltransferase MAV_4573 (313 aa).

S-adenosyl-L-methionine contacts are provided by residues D129 and 158–159; that span reads DL.

The protein belongs to the UPF0677 family.

Its function is as follows. Exhibits S-adenosyl-L-methionine-dependent methyltransferase activity. This chain is Putative S-adenosyl-L-methionine-dependent methyltransferase MAV_4573, found in Mycobacterium avium (strain 104).